We begin with the raw amino-acid sequence, 417 residues long: UPF0597 protein Cphy_1256 (417 aa).

Belongs to the UPF0597 family.

This chain is UPF0597 protein Cphy_1256, found in Lachnoclostridium phytofermentans (strain ATCC 700394 / DSM 18823 / ISDg) (Clostridium phytofermentans).